We begin with the raw amino-acid sequence, 475 residues long: NADP-dependent glyceraldehyde-3-phosphate dehydrogenase (475 aa).

Residue arginine 103 participates in substrate binding. Serine 151 serves as a coordination point for NADP(+). Substrate is bound at residue 154 to 155 (NY). Residues lysine 177, threonine 180, aspartate 215, and 230-251 (GSTGIGERIGKMAGMRPIMLEL) each bind NADP(+). Residues glutamate 250 and cysteine 284 contribute to the active site. Position 283–285 (283–285 (RCT)) interacts with substrate. Glutamate 377 is a binding site for NADP(+). Arginine 437 serves as a coordination point for substrate.

Belongs to the aldehyde dehydrogenase family. Homotetramer.

It carries out the reaction D-glyceraldehyde 3-phosphate + NADP(+) + H2O = (2R)-3-phosphoglycerate + NADPH + 2 H(+). The protein is NADP-dependent glyceraldehyde-3-phosphate dehydrogenase (gapN) of Streptococcus mutans serotype c (strain ATCC 700610 / UA159).